Consider the following 539-residue polypeptide: Glycerol kinase (539 aa).

Thr-49 contributes to the ADP binding site. Residues Thr-49, Thr-50, and Ser-51 each coordinate ATP. Sn-glycerol 3-phosphate is bound at residue Thr-49. An ADP-binding site is contributed by Arg-53. Residues Arg-119, Glu-120, Tyr-171, and Asp-280 each coordinate sn-glycerol 3-phosphate. The glycerol site is built by Arg-119, Glu-120, Tyr-171, Asp-280, and Gln-281. 2 residues coordinate ADP: Thr-302 and Gly-345. 4 residues coordinate ATP: Thr-302, Gly-345, Gln-349, and Gly-446. Residues Gly-446 and Asn-450 each coordinate ADP.

This sequence belongs to the FGGY kinase family.

The enzyme catalyses glycerol + ATP = sn-glycerol 3-phosphate + ADP + H(+). It functions in the pathway polyol metabolism; glycerol degradation via glycerol kinase pathway; sn-glycerol 3-phosphate from glycerol: step 1/1. Inhibited by fructose 1,6-bisphosphate (FBP). Key enzyme in the regulation of glycerol uptake and metabolism. Catalyzes the phosphorylation of glycerol to yield sn-glycerol 3-phosphate. This Rhodopirellula baltica (strain DSM 10527 / NCIMB 13988 / SH1) protein is Glycerol kinase.